The sequence spans 135 residues: Protein Wnt-7a (135 aa).

2 disulfides stabilise this stretch: Cys3/Cys17 and Cys5/Cys12. Residue Ser9 is the site of O-palmitoleoyl serine; by PORCN attachment. The disordered linker stretch occupies residues 41 to 69 (VEPVRASRNKRPTFLKIKKPLSYRKPMDT). Disulfide bonds link Cys81-Cys112, Cys97-Cys107, Cys111-Cys134, and Cys130-Cys131. The N-linked (GlcNAc...) asparagine glycan is linked to Asn98.

The protein belongs to the Wnt family. In terms of processing, palmitoleoylation is required for efficient binding to frizzled receptors. Depalmitoleoylation leads to Wnt signaling pathway inhibition. In terms of tissue distribution, in embryo, in brain and ventral neural tube; in adults, in brain.

Its subcellular location is the secreted. The protein resides in the extracellular space. It is found in the extracellular matrix. Its function is as follows. Ligand for members of the frizzled family of seven transmembrane receptors that functions in the canonical Wnt/beta-catenin signaling pathway. Plays an important role in embryonic development, including dorsal versus ventral patterning during limb development, skeleton development and urogenital tract development. Required for central nervous system (CNS) angiogenesis and blood-brain barrier regulation. The protein is Protein Wnt-7a (wnt7a) of Xenopus laevis (African clawed frog).